A 531-amino-acid polypeptide reads, in one-letter code: Outer dynein arm-docking complex subunit 4 (531 aa).

TPR repeat units follow at residues 15-48, 50-82, and 83-116; these read FSTY…QPEE, NCLV…ENDF, and FKGL…RPEF. Residues 161-185 are disordered; that stretch reads KQKAQVKVQKKDSKQQKKVDPERSQ. A compositionally biased stretch (basic and acidic residues) spans 169–185; that stretch reads QKKDSKQQKKVDPERSQ. TPR repeat units follow at residues 275-307, 320-353, 360-393, 397-430, and 437-470; these read VKSL…VERW, GSLH…AEKY, SRAL…ANSS, TWLY…ADAA, and LNAC…ARLL. Residues 487–531 form a disordered region; sequence KQGMEEQQESEQNNDENDNLRADGNTARDEEEEDVHVQRTEEDEG. The segment covering 492 to 503 has biased composition (acidic residues); the sequence is EQQESEQNNDEN. Over residues 521–531 the composition is skewed to basic and acidic residues; that stretch reads VHVQRTEEDEG.

As to quaternary structure, component of the outer dynein arm-docking complex. As to expression, in the mucociliary epithelium, specifically expressed in ciliated cells.

Its subcellular location is the cytoplasm. It localises to the cytoskeleton. The protein resides in the cilium axoneme. Component of the outer dynein arm-docking complex (ODA-DC) that mediates outer dynein arms (ODA) binding onto the doublet microtubule. Plays an essential role for the assembly of ODA-DC and in the docking of ODA in ciliary axoneme. Its function is as follows. Required for the docking of the outer dynein arm to cilia, hence plays an essential role in cilia motility. This is Outer dynein arm-docking complex subunit 4 (odad4) from Xenopus laevis (African clawed frog).